Consider the following 65-residue polypeptide: Putative beta-neurotoxin RjAa2 (65 aa).

An LCN-type CS-alpha/beta domain is found at 1-64 (KEGYPMGRDG…VWDSSTNKCG (64 aa)). Cystine bridges form between Cys11–Cys63, Cys15–Cys37, Cys22–Cys44, and Cys26–Cys46.

It belongs to the long (4 C-C) scorpion toxin superfamily. Sodium channel inhibitor family. Beta subfamily. In terms of tissue distribution, expressed by the venom gland.

It is found in the secreted. Beta toxins bind voltage-independently at site-4 of sodium channels (Nav) and shift the voltage of activation toward more negative potentials thereby affecting sodium channel activation and promoting spontaneous and repetitive firing. In Rhopalurus junceus (Caribbean blue scorpion), this protein is Putative beta-neurotoxin RjAa2.